We begin with the raw amino-acid sequence, 310 residues long: Methionyl-tRNA formyltransferase (310 aa).

110 to 113 (SLLP) provides a ligand contact to (6S)-5,6,7,8-tetrahydrofolate.

It belongs to the Fmt family.

It carries out the reaction L-methionyl-tRNA(fMet) + (6R)-10-formyltetrahydrofolate = N-formyl-L-methionyl-tRNA(fMet) + (6S)-5,6,7,8-tetrahydrofolate + H(+). Functionally, attaches a formyl group to the free amino group of methionyl-tRNA(fMet). The formyl group appears to play a dual role in the initiator identity of N-formylmethionyl-tRNA by promoting its recognition by IF2 and preventing the misappropriation of this tRNA by the elongation apparatus. This is Methionyl-tRNA formyltransferase from Streptomyces griseus subsp. griseus (strain JCM 4626 / CBS 651.72 / NBRC 13350 / KCC S-0626 / ISP 5235).